The primary structure comprises 268 residues: Tetraspanin-33 (268 aa).

Residues 1–23 (MVRKSPGSGKEEDFTFISPVVKY) are Cytoplasmic-facing. Residues 24-44 (LLIFFNMLFWVISMVMVGIGV) form a helical membrane-spanning segment. Residues 45-63 (YARLLKHAEAAMACLAVDP) lie on the Extracellular side of the membrane. A helical transmembrane segment spans residues 64-84 (ALLLIGVGILMFLITFCGCIG). The Cytoplasmic segment spans residues 85-95 (SLRENICLLQT). Residues 96 to 116 (FSICLTLVFLLQLAVGIVGFI) traverse the membrane as a helical segment. Topologically, residues 117–226 (FSDKARGKVS…FIHTNGCIDR (110 aa)) are extracellular. 4 cysteine pairs are disulfide-bonded: cysteine 155–cysteine 223, cysteine 156–cysteine 188, cysteine 172–cysteine 182, and cysteine 189–cysteine 202. Residues asparagine 171 and asparagine 176 are each glycosylated (N-linked (GlcNAc...) asparagine). The chain crosses the membrane as a helical span at residues 227–247 (LVNWIHSNLFLLGGVALGLAI). Topologically, residues 248 to 268 (PQVTKHLRAKLIYTWRIGIQV) are cytoplasmic.

Belongs to the tetraspanin (TM4SF) family. Homodimer; disulfide-linked.

It localises to the cell membrane. It is found in the cell junction. The protein resides in the adherens junction. The protein localises to the cytoplasm. Part of TspanC8 subgroup, composed of 6 members that interact with the transmembrane metalloprotease ADAM10. This interaction is required for ADAM10 exit from the endoplasmic reticulum and for enzymatic maturation and trafficking to the cell surface as well as substrate specificity. Different TspanC8/ADAM10 complexes have distinct substrates. This is Tetraspanin-33 (tspan33) from Xenopus laevis (African clawed frog).